The primary structure comprises 203 residues: Ribonuclease HII (203 aa).

Residues 18 to 203 (GQYAGVDEVG…SFRPVREALA (186 aa)) form the RNase H type-2 domain. 3 residues coordinate a divalent metal cation: Asp24, Glu25, and Asp116.

This sequence belongs to the RNase HII family. Mn(2+) serves as cofactor. Requires Mg(2+) as cofactor.

Its subcellular location is the cytoplasm. It catalyses the reaction Endonucleolytic cleavage to 5'-phosphomonoester.. Endonuclease that specifically degrades the RNA of RNA-DNA hybrids. The protein is Ribonuclease HII of Shewanella pealeana (strain ATCC 700345 / ANG-SQ1).